Consider the following 66-residue polypeptide: Small ribosomal subunit protein eS27 (66 aa).

Residues Cys-21, Cys-24, Cys-40, and Cys-43 each coordinate Zn(2+). The C4-type zinc-finger motif lies at 21–43; that stretch reads CPVCGNEQVIFSHATFPARCLVC.

Belongs to the eukaryotic ribosomal protein eS27 family. As to quaternary structure, part of the 30S ribosomal subunit. It depends on Zn(2+) as a cofactor.

The protein is Small ribosomal subunit protein eS27 of Hyperthermus butylicus (strain DSM 5456 / JCM 9403 / PLM1-5).